The following is a 118-amino-acid chain: MGSKAKKRVVLPTRPAPPTVEQILEDVRGAPAEDPVFTALAREDPLGPSGRTEDAEAQREQLYFQSRIYVAMNQRLQQAGAQLEQKRADLQQAGEELERDISQVGHVALPSTAAASLG.

A Phosphotyrosine modification is found at Tyr-63. A coiled-coil region spans residues Tyr-69 to Gly-105.

It belongs to the UPF0449 family.

This chain is UPF0449 protein C19orf25 homolog, found in Bos taurus (Bovine).